Here is a 424-residue protein sequence, read N- to C-terminus: Histidine--tRNA ligase (424 aa).

Belongs to the class-II aminoacyl-tRNA synthetase family. Homodimer.

It is found in the cytoplasm. The catalysed reaction is tRNA(His) + L-histidine + ATP = L-histidyl-tRNA(His) + AMP + diphosphate + H(+). The protein is Histidine--tRNA ligase of Shewanella denitrificans (strain OS217 / ATCC BAA-1090 / DSM 15013).